The primary structure comprises 567 residues: Vacuolar fusion protein MON1 homolog (567 aa).

2 disordered regions span residues 1–52 and 65–129; these read MDMD…DDEG and TSAS…DDTS. A compositionally biased stretch (pro residues) spans 7-19; sequence TNNPSPPGPPDSP. Residues 43–52 show a composition bias toward acidic residues; the sequence is DDYDDDDDEG.

Belongs to the MON1/SAND family. In terms of assembly, interacts with CCZ1A, CCZ1B and RABF2B.

The protein localises to the endosome. It is found in the prevacuolar compartment. In terms of biological role, plays an important role in membrane trafficking through the secretory apparatus. In complex with CCZ1, acts as a guanine exchange factor (GEF) for Rab7 protein family. Promotes the exchange of GDP to GTP, converting it from an inactive GDP-bound form into an active GTP-bound form. The active form is involved in protein trafficking from prevacuolar compartments (PVCs) to vacuoles. May serve as a linker between Rab5 and Rab7 protein families in PVCs and mediate PVC maturation. This chain is Vacuolar fusion protein MON1 homolog, found in Oryza sativa subsp. japonica (Rice).